A 371-amino-acid chain; its full sequence is COP9 signalosome complex subunit 5 (371 aa).

The 138-residue stretch at 51-188 (VKISAVALIK…IGAFRTYPEG (138 aa)) folds into the MPN domain. His134, His136, and Asp147 together coordinate Zn(2+). The JAMM motif signature appears at 134–147 (HSHPGYGCWLSGID). Positions 278–292 (NSSSKLKLKPTQPTT) are enriched in low complexity. Disordered stretches follow at residues 278–333 (NSSS…SRIT) and 352–371 (TPLTQSVDDKSAQATVQGRY). Basic and acidic residues predominate over residues 293–313 (KGKETTEGSDKKLKKGEKEFS). Over residues 323–333 (NKVTQESSRIT) the composition is skewed to polar residues.

This sequence belongs to the peptidase M67A family. CSN5 subfamily. As to quaternary structure, component of the COP9 signalosome (CSN) complex.

It is found in the cytoplasm. Its subcellular location is the nucleus. Functionally, catalytic Component of the COP9 signalosome (CSN) complex that acts as an regulator of the ubiquitin (Ubl) conjugation pathway by mediating the deneddylation of the cullin subunit of SCF-type E3 ubiquitin-protein ligase complexes. The protein is COP9 signalosome complex subunit 5 (RRI1) of Cryptococcus neoformans var. neoformans serotype D (strain B-3501A) (Filobasidiella neoformans).